Here is a 143-residue protein sequence, read N- to C-terminus: UPF0763 protein HH_0976 (143 aa).

It belongs to the UPF0763 family.

This is UPF0763 protein HH_0976 from Helicobacter hepaticus (strain ATCC 51449 / 3B1).